Consider the following 175-residue polypeptide: Adenine phosphoribosyltransferase (175 aa).

Belongs to the purine/pyrimidine phosphoribosyltransferase family. In terms of assembly, homodimer.

Its subcellular location is the cytoplasm. The catalysed reaction is AMP + diphosphate = 5-phospho-alpha-D-ribose 1-diphosphate + adenine. It participates in purine metabolism; AMP biosynthesis via salvage pathway; AMP from adenine: step 1/1. Catalyzes a salvage reaction resulting in the formation of AMP, that is energically less costly than de novo synthesis. This Francisella tularensis subsp. tularensis (strain WY96-3418) protein is Adenine phosphoribosyltransferase.